Consider the following 454-residue polypeptide: Zinc finger protein 474 (454 aa).

Positions Arg48 to Ile85 are disordered. Residues Leu66–Gln79 are compositionally biased toward polar residues. The segment at Gly91–Val120 adopts a C2HC/C3H-type 1 zinc-finger fold. Zn(2+) contacts are provided by Cys95, Cys98, His110, and Cys114. The disordered stretch occupies residues Leu125 to Tyr146. 5 C2HC/C3H-type zinc fingers span residues Gln162–Gly191, Arg218–Val247, Gln281–Gly310, Pro352–Asn381, and Gln425–Lys454. Residues Cys166, Cys169, His181, Cys185, Cys222, Cys225, His237, and Cys241 each contribute to the Zn(2+) site. A disordered region spans residues Phe256–Leu282. 12 residues coordinate Zn(2+): Cys285, Cys288, His300, Cys304, Cys356, Cys359, His371, Cys375, Cys429, Cys432, His444, and Cys448. Positions Val299–Pro345 are disordered.

Requires Zn(2+) as cofactor.

This Bos taurus (Bovine) protein is Zinc finger protein 474 (ZNF474).